The chain runs to 314 residues: Homoserine kinase (314 aa).

ATP is bound at residue 95-105 (PHSRGLGSSAS).

It belongs to the GHMP kinase family. Homoserine kinase subfamily.

The protein localises to the cytoplasm. The catalysed reaction is L-homoserine + ATP = O-phospho-L-homoserine + ADP + H(+). Its pathway is amino-acid biosynthesis; L-threonine biosynthesis; L-threonine from L-aspartate: step 4/5. Functionally, catalyzes the ATP-dependent phosphorylation of L-homoserine to L-homoserine phosphate. In Mycobacterium ulcerans (strain Agy99), this protein is Homoserine kinase.